A 141-amino-acid chain; its full sequence is Large ribosomal subunit protein uL16 (141 aa).

Residues 1–21 (MLMPKRVKYRKQQRGHNRGMA) are disordered.

This sequence belongs to the universal ribosomal protein uL16 family. In terms of assembly, part of the 50S ribosomal subunit.

Functionally, binds 23S rRNA and is also seen to make contacts with the A and possibly P site tRNAs. This is Large ribosomal subunit protein uL16 from Roseiflexus castenholzii (strain DSM 13941 / HLO8).